Consider the following 31-residue polypeptide: Cycloviolacin-O6 (31 aa).

Positions 1 to 31 (GTLPCGESCVWIPCISAAVGCSCKSKVCYKN) form a cross-link, cyclopeptide (Gly-Asn). 3 disulfides stabilise this stretch: cysteine 5–cysteine 21, cysteine 9–cysteine 23, and cysteine 14–cysteine 28.

Post-translationally, this is a cyclic peptide.

Probably participates in a plant defense mechanism. The chain is Cycloviolacin-O6 from Viola odorata (Sweet violet).